We begin with the raw amino-acid sequence, 94 residues long: Large ribosomal subunit protein bL25 (94 aa).

The protein belongs to the bacterial ribosomal protein bL25 family. As to quaternary structure, part of the 50S ribosomal subunit; part of the 5S rRNA/L5/L18/L25 subcomplex. Contacts the 5S rRNA. Binds to the 5S rRNA independently of L5 and L18.

This is one of the proteins that binds to the 5S RNA in the ribosome where it forms part of the central protuberance. The sequence is that of Large ribosomal subunit protein bL25 from Salmonella agona (strain SL483).